We begin with the raw amino-acid sequence, 151 residues long: Ribosome maturation factor RimP (151 aa).

The protein belongs to the RimP family.

It is found in the cytoplasm. Required for maturation of 30S ribosomal subunits. This is Ribosome maturation factor RimP from Shewanella baltica (strain OS223).